The chain runs to 154 residues: TSET complex member tstD (154 aa).

It belongs to the adaptor complexes small subunit family. As to quaternary structure, component of the TSET complex, a heterohexamer composed of tstA, tstB, tstC, tstD, tstE and tstF, which may act in plasma membrane turnover. tstA, tstB, tstC and tstD are likely to be the core complex members with tstE and tstF acting as associated scaffold proteins.

The protein localises to the cell membrane. Its subcellular location is the cytoplasm. The polypeptide is TSET complex member tstD (Dictyostelium discoideum (Social amoeba)).